A 56-amino-acid chain; its full sequence is Large ribosomal subunit protein bL32 (56 aa).

A disordered region spans residues 1-34; that stretch reads MAVQQNKPTRSKRGMRRSHDALTTSTVSVDKASG.

It belongs to the bacterial ribosomal protein bL32 family.

The protein is Large ribosomal subunit protein bL32 of Sodalis glossinidius (strain morsitans).